We begin with the raw amino-acid sequence, 202 residues long: Alpha-1-acid glycoprotein (202 aa).

The signal sequence occupies residues 1–18; it reads MALLWALAVLSHLPLLDA. Asparagine 34, asparagine 57, asparagine 94, asparagine 104, and asparagine 136 each carry an N-linked (GlcNAc...) asparagine glycan. Cysteine 91 and cysteine 184 are disulfide-bonded.

Belongs to the calycin superfamily. Lipocalin family.

The protein localises to the secreted. Functionally, functions as a transport protein in the blood stream. Binds various ligands in the interior of its beta-barrel domain. Appears to function in modulating the activity of the immune system during the acute-phase reaction. This is Alpha-1-acid glycoprotein (ORM1) from Bos taurus (Bovine).